The sequence spans 212 residues: Peroxisomal membrane protein 4 (212 aa).

2 helical membrane passes run 97-117 (GETH…LLFG) and 153-173 (WDPF…LFEY). Asn206 is a glycosylation site (N-linked (GlcNAc...) asparagine).

It belongs to the peroxisomal membrane protein PXMP2/4 family. Interacts with PEX19.

Its subcellular location is the peroxisome membrane. The chain is Peroxisomal membrane protein 4 (Pxmp4) from Mus musculus (Mouse).